We begin with the raw amino-acid sequence, 765 residues long: FHF complex subunit HOOK interacting protein 2A (765 aa).

2 stretches are compositionally biased toward polar residues: residues 200–209 and 538–550; these read LSTDTGQSCQ and NTLS…SSSP. 2 disordered regions span residues 200–234 and 538–562; these read LSTD…QMGD and NTLS…TDGK.

It belongs to the FHIP family.

Functionally, may be required for proper functioning of the nervous system. The sequence is that of FHF complex subunit HOOK interacting protein 2A (FHIP2A) from Bos taurus (Bovine).